A 480-amino-acid chain; its full sequence is CASP8 and FADD-like apoptosis regulator (480 aa).

DED domains follow at residues 1 to 73 (MSAE…RILK) and 92 to 170 (DYRV…KIQK). The tract at residues 1–195 (MSAEVIHQVE…LQAAIQKSFK (195 aa)) is interaction with CASP8. The interaction with FADD stretch occupies residues 1-227 (MSAEVIHQVE…GTQQEPVKKS (227 aa)). Positions 1-305 (MSAEVIHQVE…FACMPEHRDY (305 aa)) are interaction with CASP8 propeptide. Positions 1 to 435 (MSAEVIHQVE…CLSQKLRQER (435 aa)) are not proteolytically processed and involved in apoptosis inhibition. An interaction with CASP3 region spans residues 192 to 435 (KSFKDPSNNF…CLSQKLRQER (244 aa)). The interval 192 to 480 (KSFKDPSNNF…LRKKLIPSYT (289 aa)) is interaction with TRAF1 and TRAF2. An interaction with CASP8 subunits p18 and p10 region spans residues 217-480 (LGTQQEPVKK…LRKKLIPSYT (264 aa)). Residues 263 to 358 (ETELLRDTFT…AGKPKIFFIQ (96 aa)) form a caspase region. The interaction with CASP8 stretch occupies residues 370-480 (SSLLEVDGPA…LRKKLIPSYT (111 aa)).

This sequence belongs to the peptidase C14A family. In terms of assembly, TNFRSF6 stimulation triggers recruitment to the death-inducing signaling complex (DISC) formed by TNFRSF6, FADD and CASP8. A proteolytic fragment (p43) stays associated with the DISC. Interacts with RIPK1. In terms of processing, proteolytically processed by CASP8 generating subunit p43 and p12.

Functionally, apoptosis regulator protein which may function as a crucial link between cell survival and cell death pathways in mammalian cells. Acts as an inhibitor of TNFRSF6 mediated apoptosis. A proteolytic fragment (p43) is likely retained in the death-inducing signaling complex (DISC) thereby blocking further recruitment and processing of caspase-8 at the complex. Full length and shorter isoforms have been shown either to induce apoptosis or to reduce TNFRSF-triggered apoptosis. Lacks enzymatic (caspase) activity. This chain is CASP8 and FADD-like apoptosis regulator (CFLAR), found in Pongo abelii (Sumatran orangutan).